The chain runs to 298 residues: MTDLHTDVERYLRYLSVERQLSPITLLNYQRQLEAIINFASENGLQSWQQCDVTMVRNFAVRSRRKGLGAASLALRLSALRSFFDWLVSQNELKANPAKGVSAPKAPRHLPKNIDVDDMNRLLDIDINDPLAVRDRAMLEVMYGAGLRLSELVGLDIKHLDLESGEVWVMGKGSKERRLPIGRNAVAWIEHWLDLRNLFGSEDDALFLSKLGKRISARNVQKRFAEWGIKQGLNNHVHPHKLRHSFATHMLESSGDLRGVQELLGHANLSTTQIYTHLDFQHLASVYDAAHPRAKRGK.

A Core-binding (CB) domain is found at 2–88; sequence TDLHTDVERY…ALRSFFDWLV (87 aa). The Tyr recombinase domain maps to 109 to 288; it reads HLPKNIDVDD…DFQHLASVYD (180 aa). Residues Arg148, Lys172, His240, Arg243, and His266 contribute to the active site. The O-(3'-phospho-DNA)-tyrosine intermediate role is filled by Tyr275.

This sequence belongs to the 'phage' integrase family. XerC subfamily. In terms of assembly, forms a cyclic heterotetrameric complex composed of two molecules of XerC and two molecules of XerD, in which XerC interacts with XerD via its C-terminal region, XerD interacts with XerC via its C-terminal region and so on.

The protein localises to the cytoplasm. Its activity is regulated as follows. FtsK may regulate the catalytic switch between XerC and XerD in the heterotetrameric complex during the two steps of the recombination process. Site-specific tyrosine recombinase, which acts by catalyzing the cutting and rejoining of the recombining DNA molecules. Binds cooperatively to specific DNA consensus sequences that are separated from XerD binding sites by a short central region, forming the heterotetrameric XerC-XerD complex that recombines DNA substrates. The complex is essential to convert dimers of the bacterial chromosome into monomers to permit their segregation at cell division. It also contributes to the segregational stability of plasmids. In the complex XerC specifically exchanges the top DNA strands. This Escherichia coli O127:H6 (strain E2348/69 / EPEC) protein is Tyrosine recombinase XerC.